Reading from the N-terminus, the 272-residue chain is RNA exonuclease 4 (272 aa).

Residues 1-17 are compositionally biased toward low complexity; that stretch reads MTTTLSSNWKKLSSKLN. Residues 1 to 33 form a disordered region; sequence MTTTLSSNWKKLSSKLNQGSKVTKQPVKGKNGK. The region spanning 99-250 is the Exonuclease domain; sequence YLAMDCEFVG…EDARATMLLF (152 aa).

This sequence belongs to the REXO4 family.

It localises to the nucleus. In terms of biological role, exoribonuclease involved in ribosome biosynthesis. Involved in the processing of ITS1, the internal transcribed spacer localized between the 18S and 5.8S rRNAs. This chain is RNA exonuclease 4 (REX4), found in Debaryomyces hansenii (strain ATCC 36239 / CBS 767 / BCRC 21394 / JCM 1990 / NBRC 0083 / IGC 2968) (Yeast).